Here is a 479-residue protein sequence, read N- to C-terminus: MAQHTVYFPDAFLTQMREAMPSTLSFDDFLAACQRPLRRSIRVNTLKISVADFLQLTASYGWTLTPIPWCEEGFWIERDDEDALPLGSTAEHLSGLFYIQEASSMLPVAALFADGNAPQRVMDVAAAPGSKTTQIAARMNNEGAILANEFSASRVKVLHANISRCGIRNVALTHFDGRVFGAALPEMFDAILLDAPCSGEGVVRKDPDALKNWSPESNQEIAATQRELIDSAFHALCPGGTLVYSTCTLNQEENEAVCRWLKETYPDAVEFLPLGDLFPGANKALTEEGFLHVFPQIYDCEGFFVARLRKTQAIPALPAPKYKVGNFPFSPVKDREAGQIRQAAAGVGLNWDENLRLWQRDKELWLFPVGIEALIGKVRFSRLGIKLAETHNKGYRWQHEAVIALASPDNMNAFELTPQEAEEWYRGRDVYPQAAPVADDVLVTFQHQPIGLAKRIGSRLKNSYPRELVRDGKLFTGNA.

S-adenosyl-L-methionine-binding positions include Ala-125–Lys-131, Glu-149, Asp-176, and Asp-194. Cys-247 (nucleophile) is an active-site residue.

It belongs to the class I-like SAM-binding methyltransferase superfamily. RsmB/NOP family.

The protein localises to the cytoplasm. The catalysed reaction is cytidine(1407) in 16S rRNA + S-adenosyl-L-methionine = 5-methylcytidine(1407) in 16S rRNA + S-adenosyl-L-homocysteine + H(+). Functionally, specifically methylates the cytosine at position 1407 (m5C1407) of 16S rRNA. The polypeptide is Ribosomal RNA small subunit methyltransferase F (Escherichia coli O17:K52:H18 (strain UMN026 / ExPEC)).